We begin with the raw amino-acid sequence, 248 residues long: 1-(5-phosphoribosyl)-5-[(5-phosphoribosylamino)methylideneamino] imidazole-4-carboxamide isomerase (248 aa).

The Proton acceptor role is filled by Asp-8. Catalysis depends on Asp-131, which acts as the Proton donor.

It belongs to the HisA/HisF family.

The protein localises to the cytoplasm. The catalysed reaction is 1-(5-phospho-beta-D-ribosyl)-5-[(5-phospho-beta-D-ribosylamino)methylideneamino]imidazole-4-carboxamide = 5-[(5-phospho-1-deoxy-D-ribulos-1-ylimino)methylamino]-1-(5-phospho-beta-D-ribosyl)imidazole-4-carboxamide. It functions in the pathway amino-acid biosynthesis; L-histidine biosynthesis; L-histidine from 5-phospho-alpha-D-ribose 1-diphosphate: step 4/9. This is 1-(5-phosphoribosyl)-5-[(5-phosphoribosylamino)methylideneamino] imidazole-4-carboxamide isomerase from Cupriavidus necator (strain ATCC 17699 / DSM 428 / KCTC 22496 / NCIMB 10442 / H16 / Stanier 337) (Ralstonia eutropha).